The following is a 302-amino-acid chain: Transmembrane protein 191C (302 aa).

Disordered regions lie at residues 1 to 21 (MAAT…GRQR) and 54 to 73 (LRRR…EAAR). Residues 5–160 (QELLLQLQKD…EKLQQDALQT (156 aa)) are a coiled coil. The helical transmembrane segment at 238 to 258 (VLGALQVLLTLPLLFLGLSLL) threads the bilayer.

Belongs to the TMEM191 family.

Its subcellular location is the membrane. The sequence is that of Transmembrane protein 191C from Homo sapiens (Human).